The sequence spans 216 residues: MOB kinase activator-like 1 homolog B (216 aa).

Residues C79, C84, H161, and H166 each coordinate Zn(2+).

The protein belongs to the MOB1/phocein family.

This Dictyostelium discoideum (Social amoeba) protein is MOB kinase activator-like 1 homolog B (mobB).